A 65-amino-acid polypeptide reads, in one-letter code: uncharacterized protein (65 aa).

This is an uncharacterized protein from Archaeoglobus fulgidus (strain ATCC 49558 / DSM 4304 / JCM 9628 / NBRC 100126 / VC-16).